The chain runs to 505 residues: Cytochrome P450 2K6 (505 aa).

Residues 7–27 traverse the membrane as a helical segment; the sequence is FLLQGSPTGTILGALLLFLVI. Heme is bound at residue Cys-448.

The protein belongs to the cytochrome P450 family. The cofactor is heme. In terms of tissue distribution, detected in liver and ovary.

Its subcellular location is the endoplasmic reticulum membrane. It localises to the microsome membrane. Functionally, metabolizes aflatoxin B1 (AFB1) to the cytotoxic derivative AFB1 exo-8,9-epoxide. Does not show activity towards lauric acid. The polypeptide is Cytochrome P450 2K6 (Danio rerio (Zebrafish)).